Here is a 447-residue protein sequence, read N- to C-terminus: Phosphoglucosamine mutase (447 aa).

S107 (phosphoserine intermediate) is an active-site residue. 4 residues coordinate Mg(2+): S107, D246, D248, and D250. The residue at position 107 (S107) is a Phosphoserine.

This sequence belongs to the phosphohexose mutase family. Requires Mg(2+) as cofactor. Post-translationally, activated by phosphorylation.

It catalyses the reaction alpha-D-glucosamine 1-phosphate = D-glucosamine 6-phosphate. In terms of biological role, catalyzes the conversion of glucosamine-6-phosphate to glucosamine-1-phosphate. This is Phosphoglucosamine mutase from Ralstonia nicotianae (strain ATCC BAA-1114 / GMI1000) (Ralstonia solanacearum).